Here is a 269-residue protein sequence, read N- to C-terminus: Acyl-CoA-binding domain-containing protein 4 (269 aa).

An ACB domain is found at 12 to 101 (CQKQFQAAVS…MKLVAQKVID (90 aa)). An acyl-CoA contacts are provided by residues 23-32 (IQNLPKNGSY), 43-47 (YSYYK), K69, and Y88. Disordered stretches follow at residues 150–175 (GAVS…PRDL), 195–226 (EQRA…QCSA), and 248–269 (VALP…SAAN). Over residues 156-167 (PCLPKEPAPPSP) the composition is skewed to pro residues. A phosphoserine mark is found at S166 and S171.

Binds medium- and long-chain acyl-CoA esters and may function as an intracellular carrier of acyl-CoA esters. This chain is Acyl-CoA-binding domain-containing protein 4 (ACBD4), found in Pongo abelii (Sumatran orangutan).